The sequence spans 505 residues: ATP synthase subunit alpha (505 aa).

170-177 (GDRQTGKS) contributes to the ATP binding site.

Belongs to the ATPase alpha/beta chains family. As to quaternary structure, F-type ATPases have 2 components, CF(1) - the catalytic core - and CF(0) - the membrane proton channel. CF(1) has five subunits: alpha(3), beta(3), gamma(1), delta(1), epsilon(1). CF(0) has four main subunits: a(1), b(1), b'(1) and c(9-12).

It localises to the cellular thylakoid membrane. It catalyses the reaction ATP + H2O + 4 H(+)(in) = ADP + phosphate + 5 H(+)(out). In terms of biological role, produces ATP from ADP in the presence of a proton gradient across the membrane. The alpha chain is a regulatory subunit. This chain is ATP synthase subunit alpha, found in Prochlorococcus marinus (strain MIT 9215).